Consider the following 273-residue polypeptide: Formamidopyrimidine-DNA glycosylase (273 aa).

Pro2 serves as the catalytic Schiff-base intermediate with DNA. Glu3 acts as the Proton donor in catalysis. Residue Lys58 is the Proton donor; for beta-elimination activity of the active site. Residues His91 and Arg110 each coordinate DNA. Residues 238 to 272 (QVYGKTGQPCPRCGCLIKKIKVGGRGTHYCPRCQC) form an FPG-type zinc finger. Residue Arg262 is the Proton donor; for delta-elimination activity of the active site.

It belongs to the FPG family. As to quaternary structure, monomer. Zn(2+) is required as a cofactor.

The enzyme catalyses Hydrolysis of DNA containing ring-opened 7-methylguanine residues, releasing 2,6-diamino-4-hydroxy-5-(N-methyl)formamidopyrimidine.. It catalyses the reaction 2'-deoxyribonucleotide-(2'-deoxyribose 5'-phosphate)-2'-deoxyribonucleotide-DNA = a 3'-end 2'-deoxyribonucleotide-(2,3-dehydro-2,3-deoxyribose 5'-phosphate)-DNA + a 5'-end 5'-phospho-2'-deoxyribonucleoside-DNA + H(+). In terms of biological role, involved in base excision repair of DNA damaged by oxidation or by mutagenic agents. Acts as a DNA glycosylase that recognizes and removes damaged bases. Has a preference for oxidized purines, such as 7,8-dihydro-8-oxoguanine (8-oxoG). Has AP (apurinic/apyrimidinic) lyase activity and introduces nicks in the DNA strand. Cleaves the DNA backbone by beta-delta elimination to generate a single-strand break at the site of the removed base with both 3'- and 5'-phosphates. This Streptococcus agalactiae serotype Ia (strain ATCC 27591 / A909 / CDC SS700) protein is Formamidopyrimidine-DNA glycosylase.